Consider the following 261-residue polypeptide: 5'-nucleotidase SurE (261 aa).

Residues Asp-8, Asp-9, Ser-43, and Asn-96 each coordinate a divalent metal cation.

Belongs to the SurE nucleotidase family. A divalent metal cation is required as a cofactor.

Its subcellular location is the cytoplasm. It carries out the reaction a ribonucleoside 5'-phosphate + H2O = a ribonucleoside + phosphate. Nucleotidase that shows phosphatase activity on nucleoside 5'-monophosphates. The protein is 5'-nucleotidase SurE of Cereibacter sphaeroides (strain ATCC 17023 / DSM 158 / JCM 6121 / CCUG 31486 / LMG 2827 / NBRC 12203 / NCIMB 8253 / ATH 2.4.1.) (Rhodobacter sphaeroides).